A 374-amino-acid chain; its full sequence is Phospho-2-dehydro-3-deoxyheptonate aldolase AMT16 (374 aa).

This sequence belongs to the class-I DAHP synthase family.

The enzyme catalyses D-erythrose 4-phosphate + phosphoenolpyruvate + H2O = 7-phospho-2-dehydro-3-deoxy-D-arabino-heptonate + phosphate. It functions in the pathway mycotoxin biosynthesis. Nonribosomal peptide synthetase; part of the gene clusters that mediate the biosynthesis of AM-toxins, host-selective toxins (HSTs) causing Alternaria blotch on apple, a worldwide distributed disease. AM-toxins are cyclic depsipeptides containing the 3 residues 2-hydroxy-isovaleric acid (2-HIV), dehydroalanine, L-alanine which are common for all 3 AM-toxins I to III. The fourth precursor is L-alpha-amino-methoxyphenyl-valeric acid (L-Amv) for AM-toxin I, L-alpha-amino-phenyl-valeric acid (L-Apv) for AM-toxin II, and L-alpha-amino-hydroxyphenyl-valeric acid (L-Ahv) for AM-toxin III. AM-toxins have two target sites for affecting susceptible apple cells; they cause invagination of the plasma membrane and electrolyte loss and chloroplast disorganization. The non-ribosomal peptide synthetase AMT1 contains 4 catalytic modules and is responsible for activation of each residue in AM-toxin. The aldo-keto reductase AMT2 catalyzes the conversion of 2-keto-isovaleric acid (2-KIV) to 2-hydroxy-isovaleric acid (2-HIV), one of the precursor residues incorporated by AMT1 during AM-toxin biosynthesis, by reduction of its ketone to an alcohol. The cytochrome P450 monooxygenase AMT3 and the thioesterase AMT4 are also important for AM-toxin production, but their exact function within the AM-toxin biosynthesis are not known yet. Up to 21 proteins (including AMT1 to AMT4) are predicted to be involved in AM-toxin biosynthesis since their expression ishighly up-regulated in AM-toxin-producing cultures. This chain is Phospho-2-dehydro-3-deoxyheptonate aldolase AMT16, found in Alternaria alternata (Alternaria rot fungus).